The primary structure comprises 80 residues: Exodeoxyribonuclease 7 small subunit (80 aa).

It belongs to the XseB family. Heterooligomer composed of large and small subunits.

It is found in the cytoplasm. The catalysed reaction is Exonucleolytic cleavage in either 5'- to 3'- or 3'- to 5'-direction to yield nucleoside 5'-phosphates.. In terms of biological role, bidirectionally degrades single-stranded DNA into large acid-insoluble oligonucleotides, which are then degraded further into small acid-soluble oligonucleotides. This Pseudomonas putida (strain GB-1) protein is Exodeoxyribonuclease 7 small subunit.